The following is a 200-amino-acid chain: Peptidyl-tRNA hydrolase (200 aa).

Tyr16 contacts tRNA. His21 functions as the Proton acceptor in the catalytic mechanism. Residues Phe67, Asn69, and Asn115 each coordinate tRNA.

This sequence belongs to the PTH family. In terms of assembly, monomer.

It localises to the cytoplasm. It catalyses the reaction an N-acyl-L-alpha-aminoacyl-tRNA + H2O = an N-acyl-L-amino acid + a tRNA + H(+). In terms of biological role, hydrolyzes ribosome-free peptidyl-tRNAs (with 1 or more amino acids incorporated), which drop off the ribosome during protein synthesis, or as a result of ribosome stalling. Its function is as follows. Catalyzes the release of premature peptidyl moieties from peptidyl-tRNA molecules trapped in stalled 50S ribosomal subunits, and thus maintains levels of free tRNAs and 50S ribosomes. This Prochlorococcus marinus (strain MIT 9312) protein is Peptidyl-tRNA hydrolase.